The primary structure comprises 273 residues: Homeobox protein Nkx-2.2 (273 aa).

Disordered stretches follow at residues 1-56 (MSLT…LDAV) and 91-131 (AASA…KRKR). Residues 20 to 38 (DTNDEEGSVAEGPEEESEG) show a composition bias toward acidic residues. Positions 128–187 (KRKRRVLFSKAQTYELERRFRQQRYLSAPEREHLASLIRLTPTQVKIWFQNHRYKMKRAR) form a DNA-binding region, homeobox.

It belongs to the NK-2 homeobox family. In terms of assembly, interacts with OLIG2.

It localises to the nucleus. Its function is as follows. Transcriptional activator involved in the development of insulin-producting beta cells in the endocrine pancreas. May also be involved in specifying diencephalic neuromeric boundaries, and in controlling the expression of genes that play a role in axonal guidance. Binds to elements within the NEUROD1 promoter. This Mesocricetus auratus (Golden hamster) protein is Homeobox protein Nkx-2.2 (NKX2-2).